Reading from the N-terminus, the 421-residue chain is Serine hydroxymethyltransferase (421 aa).

(6S)-5,6,7,8-tetrahydrofolate is bound by residues Leu-121 and 125-127 (GHL). At Lys-230 the chain carries N6-(pyridoxal phosphate)lysine. Residues Glu-246 and 354–356 (SPF) each bind (6S)-5,6,7,8-tetrahydrofolate.

It belongs to the SHMT family. As to quaternary structure, homodimer. Pyridoxal 5'-phosphate is required as a cofactor.

It localises to the cytoplasm. The enzyme catalyses (6R)-5,10-methylene-5,6,7,8-tetrahydrofolate + glycine + H2O = (6S)-5,6,7,8-tetrahydrofolate + L-serine. It functions in the pathway one-carbon metabolism; tetrahydrofolate interconversion. The protein operates within amino-acid biosynthesis; glycine biosynthesis; glycine from L-serine: step 1/1. Catalyzes the reversible interconversion of serine and glycine with tetrahydrofolate (THF) serving as the one-carbon carrier. This reaction serves as the major source of one-carbon groups required for the biosynthesis of purines, thymidylate, methionine, and other important biomolecules. Also exhibits THF-independent aldolase activity toward beta-hydroxyamino acids, producing glycine and aldehydes, via a retro-aldol mechanism. In Rickettsia felis (strain ATCC VR-1525 / URRWXCal2) (Rickettsia azadi), this protein is Serine hydroxymethyltransferase.